Here is a 377-residue protein sequence, read N- to C-terminus: Caspase-4 (377 aa).

A required for LPS-binding region spans residues 1–59; sequence MAEDKHNKNPLKMLESLGKELISGLLDDFVEKNVLKLEEEEKKKIYDAKLQDKARVLVD. The propeptide occupies 1-80; sequence MAEDKHNKNP…VFVQTFLNID (80 aa). Residues 1 to 91 enclose the CARD domain; sequence MAEDKHNKNP…NSTSIKAPEE (91 aa). Ser-83 bears the Phosphoserine mark. Catalysis depends on residues His-210 and Cys-258. A propeptide spanning residues 271–289 is cleaved from the precursor; that stretch reads SPPALADSFSQSSENLEED.

The protein belongs to the peptidase C14A family. Heterotetramer that consists of two anti-parallel arranged heterodimers, each one formed by a 20 kDa (Caspase-4 subunit p20) and a 10 kDa (Caspase-4 subunit p10) subunit. Upon direct LPS-binding, forms large homooligomers, resulting in its activation. These oligomers are often referred to as 'non-canonical inflammasomes'. In its precursor form, interacts with TMEM214; this interaction is required for association with the endoplasmic reticulum membrane. Interacts with CASP1. Interacts with NOD2. Interacts with Serpinb1a, Serpinb1b and Serpinb1c; these interactions regulate CASP4 activity. In terms of assembly, heterotetramer that consists of two anti-parallel arranged heterodimers, each one formed by a 20 kDa (Caspase-4 subunit p20) and a 10 kDa (Caspase-4 subunit p10) subunit. In terms of processing, in response to activation signals, undergoes autoproteolytic cleavage and activation.

Its subcellular location is the cytoplasm. The protein resides in the cytosol. It localises to the endoplasmic reticulum membrane. It is found in the mitochondrion. The protein localises to the inflammasome. Its subcellular location is the secreted. It carries out the reaction Strict requirement for Asp at the P1 position. It has a preferred cleavage sequence of Tyr-Val-Ala-Asp-|- but also cleaves at Asp-Glu-Val-Asp-|-.. With respect to regulation, activated by homooligomerization induced by direct binding to cytosolic LPS, in a TLR4-independent manner. In addition to LPS, CASP4/CASP11 may also be activated by oxidized phospholipid 1-palmitoyl-2-arachidonoyl- sn-glycero-3-phosphorylcholine, an oxidized phospholipid (oxPAPC), in dendritic cells, promoting adaptive immunity. The role of oxPAPC is however unclear and another report suggests that oxPAPC competes with LPS-binding and inhibits the non-canonical inflammasome in macrophages. Its function is as follows. Inflammatory caspase that acts as the effector of the non-canonical inflammasome by mediating lipopolysaccharide (LPS)-induced pyroptosis. Also indirectly activates the NLRP3 and NLRP6 inflammasomes. Acts as a thiol protease that cleaves a tetrapeptide after an Asp residue at position P1: catalyzes cleavage of CGAS, GSDMD and IL18. Effector of the non-canonical inflammasome independently of NLRP3 inflammasome and CASP1: the non-canonical inflammasome promotes pyroptosis through GSDMD cleavage without involving secretion of cytokine IL1B. In the non-canonical inflammasome, CASP4 is activated by direct binding to the lipid A moiety of LPS without the need of an upstream sensor. LPS-binding promotes CASP4 activation and CASP4-mediated cleavage of GSDMD and IL18, followed by IL18 secretion through the GSDMD pore, pyroptosis of infected cells and their extrusion into the gut lumen. Also indirectly promotes secretion of mature cytokines (IL1A and HMGB1) downstream of GSDMD-mediated pyroptosis via activation of the NLRP3 and NLRP6 inflammasomes. Involved in NLRP3-dependent CASP1 activation and IL1B secretion in response to non-canonical activators, such as UVB radiation or cholera enterotoxin. Involved in NLRP6 inflammasome-dependent activation in response to lipoteichoic acid (LTA), a cell-wall component of Gram-positive bacteria, which leads to CASP1 activation and IL1B secretion. Involved in LPS-induced IL6 secretion; this activity may not require caspase enzymatic activity. The non-canonical inflammasome is required for innate immunity to cytosolic, but not vacuolar, bacteria. Plays a crucial role in the restriction of S.typhimurium replication in colonic epithelial cells during infection. Pyroptosis limits bacterial replication, while cytokine secretion promotes the recruitment and activation of immune cells and triggers mucosal inflammation. May also act as an activator of adaptive immunity in dendritic cells, following activation by oxidized phospholipid 1-palmitoyl-2-arachidonoyl- sn-glycero-3-phosphorylcholine, an oxidized phospholipid (oxPAPC). Cleavage of GSDMD is not strictly dependent on the consensus cleavage site but depends on an exosite interface on CASP4 that recognizes and binds the Gasdermin-D, C-terminal (GSDMD-CT) part. Catalyzes cleavage and maturation of IL18; IL18 processing also depends of the exosite interface on CASP4. In contrast, it does not directly process IL1B. During non-canonical inflammasome activation, cuts CGAS and may play a role in the regulation of antiviral innate immune activation. The polypeptide is Caspase-4 (CASP4) (Bos taurus (Bovine)).